The primary structure comprises 201 residues: 3-isopropylmalate dehydratase small subunit (201 aa).

The protein belongs to the LeuD family. LeuD type 1 subfamily. In terms of assembly, heterodimer of LeuC and LeuD.

The enzyme catalyses (2R,3S)-3-isopropylmalate = (2S)-2-isopropylmalate. Its pathway is amino-acid biosynthesis; L-leucine biosynthesis; L-leucine from 3-methyl-2-oxobutanoate: step 2/4. Catalyzes the isomerization between 2-isopropylmalate and 3-isopropylmalate, via the formation of 2-isopropylmaleate. This Agrobacterium fabrum (strain C58 / ATCC 33970) (Agrobacterium tumefaciens (strain C58)) protein is 3-isopropylmalate dehydratase small subunit.